The chain runs to 132 residues: Small ribosomal subunit protein uS8 (132 aa).

This sequence belongs to the universal ribosomal protein uS8 family. As to quaternary structure, part of the 30S ribosomal subunit. Contacts proteins S5 and S12.

In terms of biological role, one of the primary rRNA binding proteins, it binds directly to 16S rRNA central domain where it helps coordinate assembly of the platform of the 30S subunit. The polypeptide is Small ribosomal subunit protein uS8 (Paramagnetospirillum magneticum (strain ATCC 700264 / AMB-1) (Magnetospirillum magneticum)).